A 240-amino-acid chain; its full sequence is Probable phosphatase Athe_0620 (240 aa).

The Zn(2+) site is built by H8, H10, H16, H41, E74, H102, H132, D192, and H194.

It belongs to the PHP family. The cofactor is Zn(2+).

This is Probable phosphatase Athe_0620 from Caldicellulosiruptor bescii (strain ATCC BAA-1888 / DSM 6725 / KCTC 15123 / Z-1320) (Anaerocellum thermophilum).